A 615-amino-acid chain; its full sequence is Matrix metalloproteinase-25 (615 aa).

The propeptide occupies 1 to 162 (MCFPGSQISP…AAGLVRRRRR (162 aa)). Residues 53–73 (ILRLPAFGLPLLALLLVPLLP) traverse the membrane as a helical segment. Positions 143 to 150 (PRCSLPDV) match the Cysteine switch motif. Residues Cys145 and His287 each coordinate Zn(2+). Residue Glu288 is part of the active site. Zn(2+)-binding residues include His291 and His297. Residues 336-366 (VSQNPNARPTRKPLVPPPQPPAMPPDSPATP) form a disordered region. The segment covering 349–366 (LVPPPQPPAMPPDSPATP) has biased composition (pro residues). Hemopexin repeat units lie at residues 368-417 (PDRC…WEGL), 421-466 (VKVI…GLPP), 467-515 (GEDV…DGAP), and 516-562 (FAPD…WLDC). An intrachain disulfide couples Cys371 to Cys562. The tract at residues 547 to 582 (AESDSPQPIGPKWLDCPAPNSDPRVTSPPKTTSKTR) is disordered. Ala593 carries GPI-anchor amidated alanine lipidation. A propeptide spans 594 to 615 (SEQLSPLLLPLLPLVAGEVFSY) (removed in mature form).

It belongs to the peptidase M10A family. It depends on Zn(2+) as a cofactor. Requires Ca(2+) as cofactor. In terms of processing, the precursor is cleaved by a furin endopeptidase.

It is found in the cell membrane. Its function is as follows. May activate progelatinase A. The chain is Matrix metalloproteinase-25 (Mmp25) from Mus musculus (Mouse).